The following is a 197-amino-acid chain: MSMLSLHQLQLNIEKRNLFDLCITFLPSAITYIKGANGSGKSSLLRMIAGIMQPSSGNIYYKNSHINNCQKPYCTYIGHNLGIKLEMTVFENLKFWSEIYNSTETVQAAIHYFKLDYLLDKKCYNLSSGIQKVVAIARLIVCKSDLWLLDEVETNLSKENRDLLNNLIIMKANSGGIILLSSHQESVIKSAQILQLK.

The ABC transporter domain maps to 1–196 (MSMLSLHQLQ…VIKSAQILQL (196 aa)). 35-42 (GANGSGKS) provides a ligand contact to ATP.

The protein belongs to the ABC transporter superfamily. CcmA exporter (TC 3.A.1.107) family. In terms of assembly, the complex is composed of two ATP-binding proteins (CcmA) and two transmembrane proteins (CcmB).

The protein resides in the cell inner membrane. It carries out the reaction heme b(in) + ATP + H2O = heme b(out) + ADP + phosphate + H(+). Functionally, part of the ABC transporter complex CcmAB involved in the biogenesis of c-type cytochromes; once thought to export heme, this seems not to be the case, but its exact role is uncertain. Responsible for energy coupling to the transport system. The protein is Cytochrome c biogenesis ATP-binding export protein CcmA of Rickettsia typhi (strain ATCC VR-144 / Wilmington).